The primary structure comprises 3289 residues: tRNA nuclease CdiA (3289 aa).

Residues 1-32 (MHQPPVRFTYRLLSYLISTIIAGQPLLPAVGA) form the signal peptide. Residues 36–322 (PQNGAGMDKA…AGGNLSVSSR (287 aa)) are two-partner system transport domain (TPS). The segment at 351 to 1398 (EKLTAGRDVT…IVVRTGHLLN (1048 aa)) is FHA-1. The interval 595-615 (AVNASEKLTHSGKSSAPSLSL) is disordered. Residues 1399 to 1689 (QREGFSATTT…LTGQTGISDD (291 aa)) form a receptor binding domain (RBD) region. The interval 1690-1874 (WPLPSGNNGY…LSPEDITLHN (185 aa)) is YP domain. Positions 1875 to 1935 (GSVISGNNVQ…DLSAIGDISN (61 aa)) are periplasmic FHA-1 repeat (pFR). The interval 1979-2653 (TDTGPVATIK…TSKYDSKQTS (675 aa)) is FHA-2. The span at 2097 to 2113 (RESKNSRNGRSESHESH) shows a compositional bias: basic and acidic residues. Disordered regions lie at residues 2097 to 2116 (RESK…HAAV), 2332 to 2356 (GSSK…TIGS), and 2466 to 2513 (TGDP…TGKN). Composition is skewed to polar residues over residues 2344 to 2356 (GTTQ…TIGS) and 2472 to 2507 (TGVS…NLSV). The interval 2992–3034 (SDLSEEQKQTISTLATVSAGLAGGLTGNSTASAAVGAQSGKNA) is pretoxin (PT) domain. The VENN CT cleavage motif motif lies at 3035–3038 (VENN). Residues 3035–3289 (VENNYLSVSE…VGHIQPVKVK (255 aa)) form a C-terminal effector domain (CT); has tRNase activity region. The interval 3039–3197 (YLSVSEKTEL…PLIGQAASNK (159 aa)) is inner membrane translocation domain (IMTD), targets protein to PtsG.

The protein in the N-terminal section; belongs to the CdiA toxin family. In terms of assembly, forms a contact-dependent growth inhibition complex of CdiA-CT-NC101, CdiI-NC101 and EF-Tu; the complex is a dimer of heterotrimers. Stable CdiA-CT-NC101, EF-Tu complexes are not detected, nor are complexes with EF-Ts.

It localises to the secreted. It is found in the target cell. Its subcellular location is the target cell cytoplasm. In terms of biological role, toxic component of a toxin-immunity protein module, which functions as a cellular contact-dependent growth inhibition (CDI) system. CDI modules allow bacteria to communicate with and inhibit the growth of closely related neighboring bacteria in a contact-dependent fashion (target cell counts decrease about 10,0000-fold for this system). CdiA toxicity is neutralized by its cognate immunity protein CdiI-NC101, but not by CdiI from other bacteria. The C-terminal domain (CT) cleaves tRNA endonucleolytically at the 5' side of guanine discriminator nucleotide sites (removes the last 4 nucleotides of the tRNA acceptor arm when the first nucleotide to be removed is G). Requires EF-Ts (tsf) for toxic function of the CT domain in vivo. In vitro the CT tRNase activity requires both EF-Tu (tufA) and EF-Ts. EF-Ts probably increases steady-state GTP-EF-Tu-aa-tRNA substrate levels. The CT domain is thought to remodel this same complex to displace the 3'-end of the aa-tRNA and allow it to enter into the toxin active site. The CT domain gains access to the cytoplasm of target cells by using integral inner membrane protein PTS system glucose-specific EIICB component (ptsG). Functionally, the CdiA protein is thought to be exported from the cell through the central lumen of CdiB, the other half of its two-partner system (TPS). The TPS domain probably remains associated with CdiB while the FHA-1 domain forms an extended filament with the receptor-binding domain (RBD) at its extremity; in the secretion arrested state the C-terminus of the RBD and YP domains form a hairpin-like structure as the FHA-2, PT and CT domains are periplasmic. The YP domain is probably responsible for this arrest at the point where it re-enters the host cell periplasm. Upon binding to a target cell outer membrane receptor a signal is transmitted to activate secretion. The filament elongates slightly, the rest of CdiA is secreted and the FHA-2 domain becomes stably associated with the target cell's outer membrane where it facilitates entry of the toxic CT domain into the target cell periplasm. From there the toxic CT domain is cleaved and gains access to the target cell cytoplasm via an inner membrane protein (PtsG for this CDI). In Escherichia coli (strain NC101), this protein is tRNA nuclease CdiA.